Reading from the N-terminus, the 753-residue chain is Ribosome biogenesis protein BOP1 homolog (753 aa).

The interval 1 to 155 (MTKRSKGANE…RNTVGNVPLK (155 aa)) is disordered. 2 stretches are compositionally biased toward basic and acidic residues: residues 7–18 (GANEDKLIETKS) and 30–41 (KPVEAESLKEED). 2 stretches are compositionally biased toward acidic residues: residues 64 to 75 (DDFDSDFSDSED) and 83 to 109 (EDGD…DDDG). A compositionally biased stretch (basic and acidic residues) spans 110-121 (SEHVGSDNNEEH). The span at 122–142 (GSDEDSERGEAVEESDSSEDE) shows a compositional bias: acidic residues. 6 WD repeats span residues 421–462 (GHTG…KVWQ), 464–502 (DEAI…DEEQ), 539–581 (RHFK…TQRL), 626–665 (TGLR…KPYK), 669–708 (NHPK…DLNQ), and 722–753 (SSKG…LYCH).

Belongs to the WD repeat BOP1/ERB1 family. Interacts with PES. Interacts with WDR12.

It is found in the nucleus. The protein resides in the nucleolus. The protein localises to the nucleoplasm. Functionally, required for maturation of ribosomal RNAs and formation of the large ribosomal subunit. Plays an essential role in cell growth and survival through its regulation of ribosome biogenesis and mitotic progression. The chain is Ribosome biogenesis protein BOP1 homolog from Arabidopsis thaliana (Mouse-ear cress).